A 340-amino-acid polypeptide reads, in one-letter code: Phosphoribosylformylglycinamidine cyclo-ligase (340 aa).

This sequence belongs to the AIR synthase family.

The protein resides in the cytoplasm. It catalyses the reaction 2-formamido-N(1)-(5-O-phospho-beta-D-ribosyl)acetamidine + ATP = 5-amino-1-(5-phospho-beta-D-ribosyl)imidazole + ADP + phosphate + H(+). Its pathway is purine metabolism; IMP biosynthesis via de novo pathway; 5-amino-1-(5-phospho-D-ribosyl)imidazole from N(2)-formyl-N(1)-(5-phospho-D-ribosyl)glycinamide: step 2/2. In Lactococcus lactis subsp. cremoris (strain MG1363), this protein is Phosphoribosylformylglycinamidine cyclo-ligase.